The chain runs to 333 residues: MRPKVFITRAIPENGIEMLKEHFEVEVWPEEREIPREVLLKKVRDVDALVTMLSERIDSEVFDAAPRLRIVANYAVGYDNIDVEEATRRGIYVTNTPDVLTDATADFAWTLLLATARRLIEADHFTRSGEWKRRGIAWHPRWFLGYDVYGKTIGIVGFGRIGQAVARRARGFGMRILYYSRSRKPEAEKELGAEFRSLEDLLRESDFVVLAVPLTKETQYMINEERLRLMKKTAILVNIARGKVVDTKALMKALKEGWIAGAGLDVYEEEPYYNEELFSLKNVVLAPHIGSATYGAREGMAELVARNLIAFKNGEVPPTLVNKEVVKVRKPGF.

NADP(+) contacts are provided by residues 158–161 (FGRI), 180–182 (SRS), and 239–241 (IAR). Active-site residues include arginine 241 and glutamate 270. Catalysis depends on histidine 288, which acts as the Proton donor. 288–290 (HIG) is a binding site for NADP(+).

This sequence belongs to the D-isomer specific 2-hydroxyacid dehydrogenase family. GyaR subfamily. In terms of assembly, homodimer.

It localises to the cytoplasm. The enzyme catalyses glycolate + NAD(+) = glyoxylate + NADH + H(+). The polypeptide is Glyoxylate reductase (Thermococcus kodakarensis (strain ATCC BAA-918 / JCM 12380 / KOD1) (Pyrococcus kodakaraensis (strain KOD1))).